A 312-amino-acid polypeptide reads, in one-letter code: Ribosomal protein L11 methyltransferase (312 aa).

Residues T160, G181, D203, and N246 each coordinate S-adenosyl-L-methionine.

The protein belongs to the methyltransferase superfamily. PrmA family.

Its subcellular location is the cytoplasm. It carries out the reaction L-lysyl-[protein] + 3 S-adenosyl-L-methionine = N(6),N(6),N(6)-trimethyl-L-lysyl-[protein] + 3 S-adenosyl-L-homocysteine + 3 H(+). In terms of biological role, methylates ribosomal protein L11. The protein is Ribosomal protein L11 methyltransferase of Staphylococcus carnosus (strain TM300).